A 451-amino-acid chain; its full sequence is Bifunctional protein GlmU (451 aa).

The pyrophosphorylase stretch occupies residues 1 to 229 (MQRHAIVLAA…FEEIMGVNDR (229 aa)). UDP-N-acetyl-alpha-D-glucosamine-binding positions include 8–11 (LAAG), K22, Q72, and 77–78 (GT). D102 contributes to the Mg(2+) binding site. Positions 139, 154, and 227 each coordinate UDP-N-acetyl-alpha-D-glucosamine. N227 is a Mg(2+) binding site. Residues 230–250 (VMLSEAEKAFRKRINEQHMKN) form a linker region. The tract at residues 251–451 (GVTIIDPVTT…QTTKEGYLKK (201 aa)) is N-acetyltransferase. UDP-N-acetyl-alpha-D-glucosamine is bound by residues R332 and K350. H362 acts as the Proton acceptor in catalysis. Positions 365 and 376 each coordinate UDP-N-acetyl-alpha-D-glucosamine. Acetyl-CoA contacts are provided by residues 385 to 386 (NY), A422, and R439.

This sequence in the N-terminal section; belongs to the N-acetylglucosamine-1-phosphate uridyltransferase family. It in the C-terminal section; belongs to the transferase hexapeptide repeat family. In terms of assembly, homotrimer. Mg(2+) serves as cofactor.

The protein localises to the cytoplasm. The catalysed reaction is alpha-D-glucosamine 1-phosphate + acetyl-CoA = N-acetyl-alpha-D-glucosamine 1-phosphate + CoA + H(+). It carries out the reaction N-acetyl-alpha-D-glucosamine 1-phosphate + UTP + H(+) = UDP-N-acetyl-alpha-D-glucosamine + diphosphate. The protein operates within nucleotide-sugar biosynthesis; UDP-N-acetyl-alpha-D-glucosamine biosynthesis; N-acetyl-alpha-D-glucosamine 1-phosphate from alpha-D-glucosamine 6-phosphate (route II): step 2/2. It functions in the pathway nucleotide-sugar biosynthesis; UDP-N-acetyl-alpha-D-glucosamine biosynthesis; UDP-N-acetyl-alpha-D-glucosamine from N-acetyl-alpha-D-glucosamine 1-phosphate: step 1/1. It participates in bacterial outer membrane biogenesis; LPS lipid A biosynthesis. Catalyzes the last two sequential reactions in the de novo biosynthetic pathway for UDP-N-acetylglucosamine (UDP-GlcNAc). The C-terminal domain catalyzes the transfer of acetyl group from acetyl coenzyme A to glucosamine-1-phosphate (GlcN-1-P) to produce N-acetylglucosamine-1-phosphate (GlcNAc-1-P), which is converted into UDP-GlcNAc by the transfer of uridine 5-monophosphate (from uridine 5-triphosphate), a reaction catalyzed by the N-terminal domain. This Staphylococcus saprophyticus subsp. saprophyticus (strain ATCC 15305 / DSM 20229 / NCIMB 8711 / NCTC 7292 / S-41) protein is Bifunctional protein GlmU.